Here is a 558-residue protein sequence, read N- to C-terminus: Acylase ACY 1 proenzyme (558 aa).

T368 acts as the Nucleophile in catalysis.

Belongs to the gamma-glutamyltransferase family. Dimer of two non-identical chains processed from the same precursor.

It carries out the reaction (7R)-7-(4-carboxybutanamido)cephalosporanate + H2O = (7R)-7-aminocephalosporanate + glutarate. It catalyses the reaction an N-terminal (5-L-glutamyl)-[peptide] + an alpha-amino acid = 5-L-glutamyl amino acid + an N-terminal L-alpha-aminoacyl-[peptide]. The catalysed reaction is glutathione + H2O = L-cysteinylglycine + L-glutamate. The enzyme catalyses an S-substituted glutathione + H2O = an S-substituted L-cysteinylglycine + L-glutamate. Its function is as follows. Besides the cephalosporin acylase I activity which converts GL-7ACA into 7-ACA; this enzyme displays some gamma glutamyltranspeptidase activity. The protein is Acylase ACY 1 proenzyme (acyI) of Pseudomonas sp. (strain V22).